Here is a 193-residue protein sequence, read N- to C-terminus: MSSSVQVLSETIEIGKVVTASDEIAKRFNNLFPSIPMMLATFIAFVIVFLLLFFFLYNPVKKMIRKRQEFIQSQIDDSIKAKEDSLAKLSQAQAELIESHKQSVNIVNNAKSKAQEILASYKNKAISDANRLIEETQIDLNERKKEFDKNSRILIAETATEIAQRILKREISKSTQDEIIKDFLEDKTPIEDI.

Residues 35 to 55 traverse the membrane as a helical segment; it reads IPMMLATFIAFVIVFLLLFFF.

It belongs to the ATPase B chain family. F-type ATPases have 2 components, F(1) - the catalytic core - and F(0) - the membrane proton channel. F(1) has five subunits: alpha(3), beta(3), gamma(1), delta(1), epsilon(1). F(0) has three main subunits: a(1), b(2) and c(10-14). The alpha and beta chains form an alternating ring which encloses part of the gamma chain. F(1) is attached to F(0) by a central stalk formed by the gamma and epsilon chains, while a peripheral stalk is formed by the delta and b chains.

It localises to the cell membrane. F(1)F(0) ATP synthase produces ATP from ADP in the presence of a proton or sodium gradient. F-type ATPases consist of two structural domains, F(1) containing the extramembraneous catalytic core and F(0) containing the membrane proton channel, linked together by a central stalk and a peripheral stalk. During catalysis, ATP synthesis in the catalytic domain of F(1) is coupled via a rotary mechanism of the central stalk subunits to proton translocation. Functionally, component of the F(0) channel, it forms part of the peripheral stalk, linking F(1) to F(0). In Mycoplasmopsis synoviae (strain 53) (Mycoplasma synoviae), this protein is ATP synthase subunit b.